The following is a 966-amino-acid chain: MVFAVGQRWISESENNLGLGIITEVNSRAVTIFFPAADETRIYATASAPLTRVVFNAGDMITHQQGWQAQVTDIMVNNLTALYLVRRTDNGEEIVLKEIDLAHQINFSQPQDRLFTAQIDRSDRFALRYHALRHQQAQFKSPLRGLRGIRAGLIPHQLHIAKEVGQRLHPRVLLADEVGLGKTIEAGMILQQQIFAGRADRVLIVVPESLQHQWLVEMLRRFNLHFSLFDEERAEDFAATDEQEECNPFDSENLIICSLDWLISRPKRRTQALQTQFDLLIVDEAHHLTWSPEAANPEYQLVESLTKQIPSVLLLTATPEQLGQESHFARLKLLDADRFYDYDAFVAEQRHYRPVADAVQTLLAENPLSAAEKNAISDLLEEQDLEPLFKALDSRNEEEKATVRQELIDSLIDRHGTSRVLFRNTRQGVKGFPRRIYRQINLPLPKQYINAVRVVGRLGKNPEDELFYPERLFQNMDQNAKWWDFDPRVEWLITFLKNHRAEKVLVICRQAQTAVQLEQALRAKEGIRCAVFHERLSIIERDRAAAYFADQENGAQVLLSSAIGSEGRNFQFACRLVLFNLPENPDLLEQCIGRLDRIGQRRDIRIYVPCFADSPQAVLADWFHQGLNAFEEICPMGMALFEKCGQNLQYFLQNPTESAGFEMFLKKTAELRLQLKAELENGRDRLLELNSNGGEAAQRLAEAIRVEDNDTELVNFTLNLFDIIGVEQEDSGEKSIVITPTGTMLVPDFPGLKEEGVTVTFDRELALAREELEFLTWDHPMLRNGIDLVVSGDIGKTAASLLVNNKLPTGTLLLELIYVVESQSPKGLQLNRFLPPTPIRLLLDGKGQDLAAQVGFNRLEKQLKPMAKNMASKMVKMVRPNIEKMLSMAEQLMRERAKTLIGDAQQQADFVLSHELNRLNGLKRVNKNIRQDEIDGLEKIRIRSLSELAKASWRLDCLRVIVSNRA.

Residues 163 to 337 form the Helicase ATP-binding domain; sequence EVGQRLHPRV…FARLKLLDAD (175 aa). 176–183 is an ATP binding site; it reads DEVGLGKT. The DEAH box signature appears at 283 to 286; sequence DEAH. The Helicase C-terminal domain occupies 488 to 642; sequence RVEWLITFLK…ICPMGMALFE (155 aa).

Belongs to the SNF2/RAD54 helicase family. RapA subfamily. As to quaternary structure, interacts with the RNAP. Has a higher affinity for the core RNAP than for the holoenzyme. Its ATPase activity is stimulated by binding to RNAP.

In terms of biological role, transcription regulator that activates transcription by stimulating RNA polymerase (RNAP) recycling in case of stress conditions such as supercoiled DNA or high salt concentrations. Probably acts by releasing the RNAP, when it is trapped or immobilized on tightly supercoiled DNA. Does not activate transcription on linear DNA. Probably not involved in DNA repair. The chain is RNA polymerase-associated protein RapA from Actinobacillus succinogenes (strain ATCC 55618 / DSM 22257 / CCUG 43843 / 130Z).